Consider the following 143-residue polypeptide: Transcriptional regulator MraZ (143 aa).

2 SpoVT-AbrB domains span residues 5-47 and 76-119; these read EYQH…PLNE and ATEC…SDER.

This sequence belongs to the MraZ family. Forms oligomers.

The protein localises to the cytoplasm. The protein resides in the nucleoid. The chain is Transcriptional regulator MraZ from Enterococcus faecalis (strain ATCC 700802 / V583).